We begin with the raw amino-acid sequence, 985 residues long: Alpha-glucosidase (985 aa).

Residues 1 to 25 (MAGLKSFLASSWLLPVACGASQSIV) form the signal peptide. Residues Asn-126, Asn-145, Asn-220, Asn-255, Asn-349, and Asn-424 are each glycosylated (N-linked (GlcNAc...) asparagine). Asp-492 acts as the Nucleophile in catalysis. Glu-495 is a catalytic residue. N-linked (GlcNAc...) asparagine glycosylation is found at Asn-508, Asn-536, Asn-539, Asn-602, and Asn-624. Asp-660 acts as the Proton donor in catalysis. 5 N-linked (GlcNAc...) asparagine glycosylation sites follow: Asn-661, Asn-835, Asn-881, Asn-929, and Asn-957.

The protein belongs to the glycosyl hydrolase 31 family.

The catalysed reaction is Hydrolysis of terminal, non-reducing (1-&gt;4)-linked alpha-D-glucose residues with release of alpha-D-glucose.. Hydrolyzes malto-oligosaccharides, but has a low activity toward soluble starch. This Aspergillus oryzae (strain ATCC 42149 / RIB 40) (Yellow koji mold) protein is Alpha-glucosidase (agdA).